A 149-amino-acid polypeptide reads, in one-letter code: Calmodulin (149 aa).

N-acetylalanine is present on Ala2. 4 consecutive EF-hand domains span residues 8–43 (EQIA…LGQN), 44–79 (PTEA…KMKD), 81–116 (DSEE…LGEK), and 117–149 (LTDE…MMSK). Asp21, Asp23, Asp25, Thr27, Glu32, Asp57, Asp59, Asn61, Thr63, Glu68, Asp94, Asp96, Asn98, and Glu105 together coordinate Ca(2+). Lys116 is modified (N6,N6,N6-trimethyllysine). Asp130, Asp132, Asp134, Gln136, and Glu141 together coordinate Ca(2+).

The protein belongs to the calmodulin family.

Its function is as follows. Calmodulin mediates the control of a large number of enzymes, ion channels and other proteins by Ca(2+). Among the enzymes to be stimulated by the calmodulin-Ca(2+) complex are a number of protein kinases and phosphatases. This Lumbricus rubellus (Humus earthworm) protein is Calmodulin.